The chain runs to 69 residues: U2-agatoxin-Ao1i (69 aa).

Residues 1–20 form the signal peptide; it reads MKAIISLLLISAMVFSMIEA. Positions 21 to 34 are excised as a propeptide; it reads VPVXXGLQLFESER. Disulfide bonds link cysteine 36/cysteine 52, cysteine 43/cysteine 57, and cysteine 51/cysteine 67. Leucine 68 carries the leucine amide modification.

Belongs to the neurotoxin 01 (U2-agtx) family. Expressed by the venom gland.

It is found in the secreted. Functionally, insect active toxin causing rapid but reversible paralysis in crickets. No activity shown in mammals. Does not show effect on mammalian voltage-gated calcium channels. This Agelena orientalis (Funnel-web spider) protein is U2-agatoxin-Ao1i.